We begin with the raw amino-acid sequence, 358 residues long: Photosystem II protein D1 2 (358 aa).

Transmembrane regions (helical) follow at residues 28 to 45, 117 to 132, and 141 to 155; these read YVGWFGVLMIPCLLAATT, HFLIGISAYMGRQWEL, and WICVAYSAPLSAAFA. A chlorophyll a-binding site is contributed by histidine 117. Tyrosine 125 contacts pheophytin a. Aspartate 169 and glutamate 188 together coordinate [CaMn4O5] cluster. A helical transmembrane segment spans residues 196 to 217; the sequence is FHMLGVAGVFGGSLFSAMHGSL. Histidine 197 lines the chlorophyll a pocket. Residues histidine 214 and 263–264 contribute to the a quinone site; that span reads SF. Residue histidine 214 coordinates Fe cation. Position 271 (histidine 271) interacts with Fe cation. A helical transmembrane segment spans residues 273-287; the sequence is FLAAWPVVGIWFTSM. [CaMn4O5] cluster is bound by residues histidine 331, glutamate 332, aspartate 341, and alanine 343. Residues 344–358 constitute a propeptide that is removed on maturation; that stretch reads ATESTPVALQAPTIG.

The protein belongs to the reaction center PufL/M/PsbA/D family. PSII is composed of 1 copy each of membrane proteins PsbA, PsbB, PsbC, PsbD, PsbE, PsbF, PsbH, PsbI, PsbJ, PsbK, PsbL, PsbM, PsbT, PsbX, PsbY, PsbZ, Psb30/Ycf12, peripheral proteins PsbO, CyanoQ (PsbQ), PsbU, PsbV and a large number of cofactors. It forms dimeric complexes. Requires The D1/D2 heterodimer binds P680, chlorophylls that are the primary electron donor of PSII, and subsequent electron acceptors. It shares a non-heme iron and each subunit binds pheophytin, quinone, additional chlorophylls, carotenoids and lipids. D1 provides most of the ligands for the Mn4-Ca-O5 cluster of the oxygen-evolving complex (OEC). There is also a Cl(-1) ion associated with D1 and D2, which is required for oxygen evolution. The PSII complex binds additional chlorophylls, carotenoids and specific lipids. as cofactor. Post-translationally, tyr-160 forms a radical intermediate that is referred to as redox-active TyrZ, YZ or Y-Z. C-terminally processed by CtpA; processing is essential to allow assembly of the oxygen-evolving complex and thus photosynthetic growth.

It is found in the cellular thylakoid membrane. The catalysed reaction is 2 a plastoquinone + 4 hnu + 2 H2O = 2 a plastoquinol + O2. Functionally, photosystem II (PSII) is a light-driven water:plastoquinone oxidoreductase that uses light energy to abstract electrons from H(2)O, generating O(2) and a proton gradient subsequently used for ATP formation. It consists of a core antenna complex that captures photons, and an electron transfer chain that converts photonic excitation into a charge separation. The D1/D2 (PsbA/PsbD) reaction center heterodimer binds P680, the primary electron donor of PSII as well as several subsequent electron acceptors. This is Photosystem II protein D1 2 from Synechococcus sp. (strain WH7803).